Here is a 343-residue protein sequence, read N- to C-terminus: UDP-3-O-acylglucosamine N-acyltransferase (343 aa).

Catalysis depends on His-248, which acts as the Proton acceptor.

The protein belongs to the transferase hexapeptide repeat family. LpxD subfamily. Homotrimer.

It carries out the reaction a UDP-3-O-[(3R)-3-hydroxyacyl]-alpha-D-glucosamine + a (3R)-hydroxyacyl-[ACP] = a UDP-2-N,3-O-bis[(3R)-3-hydroxyacyl]-alpha-D-glucosamine + holo-[ACP] + H(+). It functions in the pathway bacterial outer membrane biogenesis; LPS lipid A biosynthesis. Functionally, catalyzes the N-acylation of UDP-3-O-acylglucosamine using 3-hydroxyacyl-ACP as the acyl donor. Is involved in the biosynthesis of lipid A, a phosphorylated glycolipid that anchors the lipopolysaccharide to the outer membrane of the cell. The polypeptide is UDP-3-O-acylglucosamine N-acyltransferase (Microcystis aeruginosa (strain NIES-843 / IAM M-2473)).